Consider the following 409-residue polypeptide: Endoglucanase B (409 aa).

Residues histidine 61, 65-66 (WY), tyrosine 92, and histidine 127 each bind substrate. Catalysis depends on glutamate 165, which acts as the Proton donor. Tyrosine 228 serves as a coordination point for substrate. Glutamate 254 functions as the Nucleophile in the catalytic mechanism. Substrate contacts are provided by residues 260–261 (AT), tryptophan 288, and 293–295 (KDE). The interval 326 to 372 (IRESATTPPSDPTPPSDPDPGEPEPDPGEPDPTPPSDPGDYPAWDPN) is disordered. Residues 334 to 343 (PSDPTPPSDP) show a composition bias toward pro residues. Over residues 344–354 (DPGEPEPDPGE) the composition is skewed to acidic residues.

This sequence belongs to the glycosyl hydrolase 5 (cellulase A) family.

The enzyme catalyses Endohydrolysis of (1-&gt;4)-beta-D-glucosidic linkages in cellulose, lichenin and cereal beta-D-glucans.. In Evansella cellulosilytica (strain ATCC 21833 / DSM 2522 / FERM P-1141 / JCM 9156 / N-4) (Bacillus cellulosilyticus), this protein is Endoglucanase B (celB).